The following is a 356-amino-acid chain: Protein RecA (356 aa).

77-84 (GPESSGKT) serves as a coordination point for ATP.

It belongs to the RecA family.

It localises to the cytoplasm. Can catalyze the hydrolysis of ATP in the presence of single-stranded DNA, the ATP-dependent uptake of single-stranded DNA by duplex DNA, and the ATP-dependent hybridization of homologous single-stranded DNAs. It interacts with LexA causing its activation and leading to its autocatalytic cleavage. The sequence is that of Protein RecA from Caulobacter vibrioides (strain ATCC 19089 / CIP 103742 / CB 15) (Caulobacter crescentus).